A 515-amino-acid chain; its full sequence is Putative pumilio homolog 8, chloroplastic (515 aa).

The segment at M1–R33 is disordered. A chloroplast-targeting transit peptide spans M1–C70. Over residues S10–L20 the composition is skewed to low complexity. Residues S174–N515 enclose the PUM-HD domain. Pumilio repeat units lie at residues E198–S233, E234–L269, M270–K308, A310–E345, D346–T381, E382–A417, Q418–S456, and V457–E490.

The protein localises to the plastid. It is found in the chloroplast. The protein resides in the cytoplasm. In terms of biological role, sequence-specific RNA-binding protein that regulates translation and mRNA stability by binding the 3'-UTR of target mRNAs. This Arabidopsis thaliana (Mouse-ear cress) protein is Putative pumilio homolog 8, chloroplastic (APUM8).